The primary structure comprises 116 residues: MTDKKVTRLRRARKARLKMHELEVVRLCVFRSSQHIYAQVISADGNKVLASASTLDKELRDGATGNIDAATKVGQLVATRAKAAGVSQVAFDRSGFKYHGRVKALADAAREAGLEF.

The protein belongs to the universal ribosomal protein uL18 family. Part of the 50S ribosomal subunit; part of the 5S rRNA/L5/L18/L25 subcomplex. Contacts the 5S and 23S rRNAs.

This is one of the proteins that bind and probably mediate the attachment of the 5S RNA into the large ribosomal subunit, where it forms part of the central protuberance. The protein is Large ribosomal subunit protein uL18 of Pseudomonas fluorescens (strain ATCC BAA-477 / NRRL B-23932 / Pf-5).